Here is a 419-residue protein sequence, read N- to C-terminus: MFSSSSAMTGKRAESWSRLLLLWLYRCARGLLVLSSSLDRDKLQLKATKQGSRNRFLHILWRCIVVMIYAGLWPMLTSAVIGKRLESYADVLALAQSMSVSILAVISFVIQARGENQFREVLNRYLALYQRICLTTRLRHLFPTKFVVFFLLKLFFTLCGCFHEIIPLFENSHFDDISQMVGTGFGIYMWLGTLCVLDACFLGFLVSGILYEHMANNIIAMLKRMEPIESQDERYRMTKYRRMQLLCDFADELDECAAIYSELYHVTNSFRRILQWQILFYIYLNFINICLMLYQYILHFLNDDEVVFVSIVMAFVKLANLVLLMMCADYTVRQSEVPKKLPLDIVCSDMDERWDKSVETFLGQLQTQRLEIKVLGFFHLNNEFILLILSAIISYLFILIQFGITGGFEASEDIKNRFD.

The Cytoplasmic portion of the chain corresponds to 1–55 (MFSSSSAMTGKRAESWSRLLLLWLYRCARGLLVLSSSLDRDKLQLKATKQGSRNR). A helical transmembrane segment spans residues 56–76 (FLHILWRCIVVMIYAGLWPML). Topologically, residues 77 to 90 (TSAVIGKRLESYAD) are extracellular. The chain crosses the membrane as a helical span at residues 91-111 (VLALAQSMSVSILAVISFVIQ). The Cytoplasmic portion of the chain corresponds to 112-145 (ARGENQFREVLNRYLALYQRICLTTRLRHLFPTK). A helical transmembrane segment spans residues 146 to 166 (FVVFFLLKLFFTLCGCFHEII). The Extracellular portion of the chain corresponds to 167 to 184 (PLFENSHFDDISQMVGTG). The chain crosses the membrane as a helical span at residues 185–205 (FGIYMWLGTLCVLDACFLGFL). At 206–277 (VSGILYEHMA…NSFRRILQWQ (72 aa)) the chain is on the cytoplasmic side. The chain crosses the membrane as a helical span at residues 278-298 (ILFYIYLNFINICLMLYQYIL). The Extracellular segment spans residues 299–305 (HFLNDDE). Residues 306-326 (VVFVSIVMAFVKLANLVLLMM) traverse the membrane as a helical segment. Over 327 to 383 (CADYTVRQSEVPKKLPLDIVCSDMDERWDKSVETFLGQLQTQRLEIKVLGFFHLNNE) the chain is Cytoplasmic. The chain crosses the membrane as a helical span at residues 384 to 404 (FILLILSAIISYLFILIQFGI). Over 405–419 (TGGFEASEDIKNRFD) the chain is Extracellular.

Belongs to the insect chemoreceptor superfamily. Gustatory receptor (GR) family. Gr93a subfamily. In larvae, is expressed in neurons of the dorsal pharyngeal sense organs.

Its subcellular location is the cell membrane. Functionally, gustatory receptor required for response to the bitter in taste neurons. Gr93a cells respond to bitter compounds such as caffeine. Flies avoid bitter substances, suggesting that Gr93a neuron activity is sufficient to mediate avoidance behavior. The polypeptide is Gustatory receptor for bitter taste 93a (Gr93a) (Drosophila melanogaster (Fruit fly)).